The sequence spans 244 residues: Protein crossbronx (244 aa).

Residues 20–176 (QQEYKILAEY…VQENIKESKE (157 aa)) form the UBC core domain. Residues 209–244 (AGRSKQTEPSAQQGNGGHATGLSWVKEGEFKPLSIE) form a disordered region.

Belongs to the ubiquitin-conjugating enzyme family. FTS subfamily.

The chain is Protein crossbronx (cbx) from Drosophila simulans (Fruit fly).